The primary structure comprises 179 residues: Large ribosomal subunit protein uL5 (179 aa).

Belongs to the universal ribosomal protein uL5 family. Part of the 50S ribosomal subunit; part of the 5S rRNA/L5/L18/L25 subcomplex. Contacts the 5S rRNA and the P site tRNA. Forms a bridge to the 30S subunit in the 70S ribosome.

Its function is as follows. This is one of the proteins that bind and probably mediate the attachment of the 5S RNA into the large ribosomal subunit, where it forms part of the central protuberance. In the 70S ribosome it contacts protein S13 of the 30S subunit (bridge B1b), connecting the 2 subunits; this bridge is implicated in subunit movement. Contacts the P site tRNA; the 5S rRNA and some of its associated proteins might help stabilize positioning of ribosome-bound tRNAs. This is Large ribosomal subunit protein uL5 from Parasynechococcus marenigrum (strain WH8102).